Here is a 773-residue protein sequence, read N- to C-terminus: Cadherin-5 (773 aa).

The N-terminal stretch at 1-18 (MKKLILLFSLFLAPAFSY) is a signal peptide. A propeptide spanning residues 19–40 (KENQKINQNFSSNNTSHKRLKR) is cleaved from the precursor. N-linked (GlcNAc...) asparagine glycosylation is found at N27, N31, and N32. 5 consecutive Cadherin domains span residues 39 to 144 (KRDW…APIF), 145 to 251 (VQKI…FPVF), 252 to 366 (KHPS…PPVF), 367 to 474 (TKLS…APEL), and 474 to 582 (LVYP…DFTF). Residues 41–595 (DWIWNRMHIR…RAKQVGVSVQ (555 aa)) are Extracellular-facing. Ca(2+) is bound by residues E51, E52, D102, and E104. N121 is a glycosylation site (N-linked (GlcNAc...) asparagine). 5 residues coordinate Ca(2+): D136, I137, N138, D139, and N140. N-linked (GlcNAc...) asparagine glycosylation is present at N150. Positions 170, 172, 179, and 224 each coordinate Ca(2+). N-linked (GlcNAc...) asparagine glycosylation is found at N263, N437, N519, and N531. Residues 596-617 (ALVAIFICIFTIIAVIALLILL) traverse the membrane as a helical segment. At 618–773 (RKRHKKDLSG…GSEPNEDFVY (156 aa)) the chain is on the cytoplasmic side.

In terms of processing, N-glycosylated. O-glycosylated.

Its subcellular location is the cell junction. The protein localises to the adherens junction. The protein resides in the cell membrane. It is found in the cytoplasm. Functionally, cadherins are calcium-dependent cell adhesion proteins. They preferentially interact with themselves in a homophilic manner in connecting cells; cadherins may thus contribute to the sorting of heterogeneous cell types. This cadherin may play a important role in endothelial cell biology through control of the cohesion and organization of the intercellular junctions. Plays a role in coupling actin fibers to cell junctions in endothelial cells. Associates with CTNND1/p120-catenin to control CADH5 endocytosis. The polypeptide is Cadherin-5 (Gallus gallus (Chicken)).